The primary structure comprises 404 residues: L-cysteine:1D-myo-inositol 2-amino-2-deoxy-alpha-D-glucopyranoside ligase (404 aa).

C35 provides a ligand contact to Zn(2+). L-cysteinyl-5'-AMP contacts are provided by residues 35–38, T50, and 73–75; these read CGIT and NVT. A 'HIGH' region motif is present at residues 37–47; the sequence is ITPYDATHLGH. The 'ERGGDP' region signature appears at 178 to 183; sequence ERGGDP. W219 contacts L-cysteinyl-5'-AMP. C223 serves as a coordination point for Zn(2+). Position 241 to 243 (241 to 243) interacts with L-cysteinyl-5'-AMP; the sequence is GND. Residue H248 participates in Zn(2+) binding. I275 contacts L-cysteinyl-5'-AMP. Positions 281–285 match the 'KMSKS' region motif; that stretch reads KMSKS.

It belongs to the class-I aminoacyl-tRNA synthetase family. MshC subfamily. Monomer. Zn(2+) serves as cofactor.

It carries out the reaction 1D-myo-inositol 2-amino-2-deoxy-alpha-D-glucopyranoside + L-cysteine + ATP = 1D-myo-inositol 2-(L-cysteinylamino)-2-deoxy-alpha-D-glucopyranoside + AMP + diphosphate + H(+). Catalyzes the ATP-dependent condensation of GlcN-Ins and L-cysteine to form L-Cys-GlcN-Ins. This is L-cysteine:1D-myo-inositol 2-amino-2-deoxy-alpha-D-glucopyranoside ligase from Salinispora tropica (strain ATCC BAA-916 / DSM 44818 / JCM 13857 / NBRC 105044 / CNB-440).